We begin with the raw amino-acid sequence, 226 residues long: UPF0173 metal-dependent hydrolase TM_1162 (226 aa).

This sequence belongs to the UPF0173 family.

The chain is UPF0173 metal-dependent hydrolase TM_1162 from Thermotoga maritima (strain ATCC 43589 / DSM 3109 / JCM 10099 / NBRC 100826 / MSB8).